The sequence spans 399 residues: Tryptophan synthase beta chain (399 aa).

An N6-(pyridoxal phosphate)lysine modification is found at K92.

It belongs to the TrpB family. As to quaternary structure, tetramer of two alpha and two beta chains. Requires pyridoxal 5'-phosphate as cofactor.

The enzyme catalyses (1S,2R)-1-C-(indol-3-yl)glycerol 3-phosphate + L-serine = D-glyceraldehyde 3-phosphate + L-tryptophan + H2O. It participates in amino-acid biosynthesis; L-tryptophan biosynthesis; L-tryptophan from chorismate: step 5/5. Its function is as follows. The beta subunit is responsible for the synthesis of L-tryptophan from indole and L-serine. The protein is Tryptophan synthase beta chain of Bordetella petrii (strain ATCC BAA-461 / DSM 12804 / CCUG 43448).